The chain runs to 94 residues: MGNCNKPPKRPPNTQTSAAQPSAEFRRTALPSLYGRYNCKCCWFADTNLITCNDHYLCLRCHQTMLRNSELCHICWKPLPTSITVPVEPSAPPP.

Positions 1 to 22 (MGNCNKPPKRPPNTQTSAAQPS) are disordered. Glycine 2 carries N-myristoyl glycine; by host lipidation. The segment at 39 to 75 (CKCCWFADTNLITCNDHYLCLRCHQTMLRNSELCHIC) adopts an RING-type; atypical zinc-finger fold. Positions 89-92 (PSAP) match the PTAP/PSAP motif motif.

The protein belongs to the arenaviridae Z protein family. In terms of assembly, interacts with protein NP; this interaction probably directs the encapsidated genome to budding sites. Interacts (via RING domain) with polymerase L; this interaction inhibits viral transcription and replication, Z partially blocks the product exit tunnel for the releasing nascent RNA product. Interacts with the glycoprotein complex; this interaction plays a role in virion budding. Interacts with host eIF4E; this interaction results in eIF4E reduced affinity for its substrate, the 5'-m7 G cap structure. Interacts (via late-budding domain) with host TSG101; this interaction is essential for budding and release of viral particles. Interacts with host RPLP0; this interaction may serve to load ribosome-like particles inside the virion. Interacts with host PML; this interaction induces PML bodies redistribution in the cytoplasm upon viral infection. Myristoylation is required for the role of RING finger protein Z in assembly and budding.

The protein resides in the virion. It localises to the host cytoplasm. Its subcellular location is the host perinuclear region. The protein localises to the host cell membrane. Plays a crucial role in virion assembly and budding. Expressed late in the virus life cycle, it acts as an inhibitor of viral transcription and RNA synthesis by interacting with the viral polymerase L. Presumably recruits the NP encapsidated genome to cellular membranes at budding sites via direct interaction with NP. Plays critical roles in the final steps of viral release by interacting with host TSG101, a member of the vacuolar protein-sorting pathway and using other cellular host proteins involved in vesicle formation pathway. The budding of the virus progeny occurs after association of protein Z with the viral glycoprotein complex SSP-GP1-GP2 at the cell periphery, step that requires myristoylation of protein Z. Also selectively represses protein production by associating with host eIF4E. In cell-based minigenome assay, has an inhibitory effect on the ribonucleoprotein machinery (vRNP), which is responsible for the replication and transcription of the viral genome. This is RING finger protein Z from Calomys callosus (Large vesper mouse).